Here is an 824-residue protein sequence, read N- to C-terminus: ATP-dependent RNA helicase drs1 (824 aa).

Residues 1–305 form a disordered region; it reads MAGTKKRANA…EEKTSESAMA (305 aa). Composition is skewed to acidic residues over residues 11–37 and 90–108; these read DDDF…EGDD and QEEE…EDDG. The span at 137–166 shows a compositional bias: basic and acidic residues; sequence EEGKGGDKKAVDIDDIISRRQAKKEAELIR. 3 stretches are compositionally biased toward acidic residues: residues 178–203, 212–257, and 273–284; these read EFSE…ELLA, DGEE…DDDS, and DSDEESQVDAEE. Positions 285–305 are enriched in basic and acidic residues; it reads EEKRKAFFAPEEEKTSESAMA. The short motif at 309 to 337 is the Q motif element; that stretch reads RSFQEFNLSRPILRGLAGVNFSNPTPIQR. One can recognise a Helicase ATP-binding domain in the interval 340 to 514; that stretch reads IPVALLGKDI…RVGLNRPVRL (175 aa). An ATP-binding site is contributed by 353 to 360; it reads AVTGSGKT. A DEAD box motif is present at residues 462–465; it reads DEAD. In terms of domain architecture, Helicase C-terminal spans 541–685; sequence RLGYLLYLCK…KIASRVIEPA (145 aa). Basic and acidic residues-rich tracts occupy residues 739 to 749 and 767 to 790; these read KRTWFETERDK and MSKK…RQRQ. The segment at 739–824 is disordered; it reads KRTWFETERD…KKDNKKKGKK (86 aa).

The protein belongs to the DEAD box helicase family. DDX27/DRS1 subfamily. In terms of assembly, associates with pre-ribosomal particles.

Its subcellular location is the nucleus. It localises to the nucleolus. It carries out the reaction ATP + H2O = ADP + phosphate + H(+). Its function is as follows. ATP-binding RNA helicase involved in ribosome assembly. The sequence is that of ATP-dependent RNA helicase drs1 (drs1) from Aspergillus niger (strain ATCC MYA-4892 / CBS 513.88 / FGSC A1513).